Consider the following 635-residue polypeptide: Extracellular metalloproteinase mep (635 aa).

The first 19 residues, 1-19 (MMRGLLLAGALGLPLAVLA), serve as a signal peptide directing secretion. A propeptide spanning residues 20–246 (HPTHHAHGLQ…VHGVVDYVAE (227 aa)) is cleaved from the precursor. Asn-287 carries N-linked (GlcNAc...) asparagine glycosylation. The span at 290-309 (TTRGNNGIAQSNPTGGSQYL) shows a compositional bias: polar residues. A disordered region spans residues 290-311 (TTRGNNGIAQSNPTGGSQYLKN). Residue His-430 participates in Zn(2+) binding. Glu-431 is an active-site residue. Residue His-434 coordinates Zn(2+).

The protein belongs to the peptidase M36 family. Zn(2+) serves as cofactor.

The protein localises to the secreted. Secreted metalloproteinase that allows assimilation of proteinaceous substrates. This is Extracellular metalloproteinase mep (mep) from Aspergillus flavus (strain ATCC 200026 / FGSC A1120 / IAM 13836 / NRRL 3357 / JCM 12722 / SRRC 167).